Consider the following 373-residue polypeptide: Transaldolase (373 aa).

The Schiff-base intermediate with substrate role is filled by lysine 143.

Belongs to the transaldolase family. Type 2 subfamily.

The protein resides in the cytoplasm. The enzyme catalyses D-sedoheptulose 7-phosphate + D-glyceraldehyde 3-phosphate = D-erythrose 4-phosphate + beta-D-fructose 6-phosphate. It functions in the pathway carbohydrate degradation; pentose phosphate pathway; D-glyceraldehyde 3-phosphate and beta-D-fructose 6-phosphate from D-ribose 5-phosphate and D-xylulose 5-phosphate (non-oxidative stage): step 2/3. Transaldolase is important for the balance of metabolites in the pentose-phosphate pathway. This is Transaldolase (tal) from Mycobacterium tuberculosis (strain ATCC 25618 / H37Rv).